Consider the following 162-residue polypeptide: Disulfide bond formation protein B (162 aa).

The Cytoplasmic portion of the chain corresponds to 1 to 10 (MGDWLLRRRG). A helical transmembrane segment spans residues 11–27 (LALLLVLTLLLNLGALG). Topologically, residues 28-45 (LEYLADMPPCPLCWVQRG) are periplasmic. Cysteines 37 and 40 form a disulfide. Residues 46–62 (VFGLMSLVALVGLVYFP) form a helical membrane-spanning segment. Residues 63 to 68 (RGWGRW) lie on the Cytoplasmic side of the membrane. The helical transmembrane segment at 69–86 (PLAGALGLSALTGVIIAL) threads the bilayer. Residues 87–140 (RHLYIQANPDAVSCGMSPEVLAQFLPWWEVLLEILSGTTDCTQVDAVLGVPLPG) are Periplasmic-facing. The cysteines at positions 100 and 127 are disulfide-linked. The chain crosses the membrane as a helical span at residues 141 to 159 (WTLVGYLALGALGLYAVLA). Residues 160-162 (RRA) are Cytoplasmic-facing.

The protein belongs to the DsbB family.

The protein localises to the cell inner membrane. Its function is as follows. Required for disulfide bond formation in some periplasmic proteins. Acts by oxidizing the DsbA protein. The protein is Disulfide bond formation protein B of Alkalilimnicola ehrlichii (strain ATCC BAA-1101 / DSM 17681 / MLHE-1).